We begin with the raw amino-acid sequence, 306 residues long: Acetyl-coenzyme A carboxylase carboxyl transferase subunit beta (306 aa).

A CoA carboxyltransferase N-terminal domain is found at 25-294 (LWIKDPTSGE…APEPSHAFSK (270 aa)). Residues 287–306 (EPSHAFSKDSQTQISKTKAA) are disordered. Residues 294-306 (KDSQTQISKTKAA) show a composition bias toward polar residues.

Belongs to the AccD/PCCB family. In terms of assembly, acetyl-CoA carboxylase is a heterohexamer composed of biotin carboxyl carrier protein (AccB), biotin carboxylase (AccC) and two subunits each of ACCase subunit alpha (AccA) and ACCase subunit beta (AccD).

The protein resides in the cytoplasm. The enzyme catalyses N(6)-carboxybiotinyl-L-lysyl-[protein] + acetyl-CoA = N(6)-biotinyl-L-lysyl-[protein] + malonyl-CoA. Its pathway is lipid metabolism; malonyl-CoA biosynthesis; malonyl-CoA from acetyl-CoA: step 1/1. Component of the acetyl coenzyme A carboxylase (ACC) complex. Biotin carboxylase (BC) catalyzes the carboxylation of biotin on its carrier protein (BCCP) and then the CO(2) group is transferred by the transcarboxylase to acetyl-CoA to form malonyl-CoA. In Bartonella bacilliformis (strain ATCC 35685 / KC583 / Herrer 020/F12,63), this protein is Acetyl-coenzyme A carboxylase carboxyl transferase subunit beta.